A 492-amino-acid polypeptide reads, in one-letter code: Acyl-CoA-binding domain-containing protein 5 (492 aa).

In terms of domain architecture, ACB spans 8 to 97 (HATRFEAAVK…MKKILESMPM (90 aa)). Residues 19–28 (IQSLPKNGSF), 39–43 (YSFYK), lysine 65, and tyrosine 84 each bind an acyl-CoA. 2 disordered regions span residues 141–162 (AVNGKAESSDSGAESEEEGLRE) and 335–399 (VKCG…DRGP). The span at 153 to 162 (AESEEEGLRE) shows a compositional bias: acidic residues. A compositionally biased stretch (basic and acidic residues) spans 335–360 (VKCGGEDGKASNGAPHKEKKDGEKAD). Residues 378–388 (GSQGGQMGNGG) are compositionally biased toward gly residues. Residues 389–399 (DGERWGSDRGP) show a composition bias toward basic and acidic residues. The stretch at 405 to 431 (EQIAVVLMRLQEDMQNVLQRLHMLEAV) forms a coiled coil. A helical membrane pass occupies residues 464–484 (GVLAFAIVWPFIAQWLVHVYL).

Belongs to the ATG37 family.

The protein localises to the peroxisome membrane. In terms of biological role, acyl-CoA binding protein which acts as the peroxisome receptor for pexophagy but is dispensable for aggrephagy and nonselective autophagy. Binds medium- and long-chain acyl-CoA esters. This Gallus gallus (Chicken) protein is Acyl-CoA-binding domain-containing protein 5 (ACBD5).